An 89-amino-acid chain; its full sequence is Small ribosomal subunit protein uS14A (89 aa).

It belongs to the universal ribosomal protein uS14 family. In terms of assembly, part of the 30S ribosomal subunit. Contacts proteins S3 and S10.

Its function is as follows. Binds 16S rRNA, required for the assembly of 30S particles and may also be responsible for determining the conformation of the 16S rRNA at the A site. This is Small ribosomal subunit protein uS14A from Staphylococcus aureus (strain MRSA252).